The primary structure comprises 150 residues: MELHQLKSVSKSRNHKSKVVGRGHGSGLGKTSSRGQKGQKARKSGLTRLGFEGGQTPLYRRLPKYGVANKGILKKRWVVLNLNKVAKLNLKTVTRATLIEKKVISKKNNLPLKLIGNTKLTTPIHFEVQKISKNALNAVQTSKGSVKIIT.

Residues 1-49 are disordered; it reads MELHQLKSVSKSRNHKSKVVGRGHGSGLGKTSSRGQKGQKARKSGLTRL. Residues 10–21 show a composition bias toward basic residues; that stretch reads SKSRNHKSKVVG.

The protein belongs to the universal ribosomal protein uL15 family. In terms of assembly, part of the 50S ribosomal subunit.

Functionally, binds to the 23S rRNA. The sequence is that of Large ribosomal subunit protein uL15 from Mycoplasma genitalium (strain ATCC 33530 / DSM 19775 / NCTC 10195 / G37) (Mycoplasmoides genitalium).